Consider the following 317-residue polypeptide: WD repeat-containing protein 82 (317 aa).

WD repeat units lie at residues 21–60 (ENTD…QSRT), 107–146 (GHTK…CQGL), 148–186 (HLSG…KGPF), 194–233 (EKEC…PLQT), 238–278 (PNNK…KVSV), and 282–317 (DHPG…EEGL).

The protein belongs to the WD repeat SWD2 family. In terms of assembly, component of the SET1 complex, composed at least of the catalytic subunit Set1, wds/WDR5, Wdr82, Rbbp5, ash2, Cfp1/CXXC1, hcf and Dpy-30L1. Interacts with male-specific lethal (MSL) histone acetyltransferase complex at least composed of mof, msl-1, msl-2 and msl-3. Interacts with su(sable).

The protein resides in the nucleus. Component of the SET1 complex that specifically di- and trimethylates 'Lys-4' of histone H3. Together with su(sable), part of a transcription termination checkpoint that promotes transcription termination of aberrant RNAs and their subsequent degradation by the nuclear exosome. This is WD repeat-containing protein 82 from Drosophila melanogaster (Fruit fly).